Reading from the N-terminus, the 349-residue chain is Putative transport protein jhp_0514 (349 aa).

The next 8 helical transmembrane spans lie at 6–26 (FFWI…QDFL), 27–47 (MDAL…VFLN), 56–76 (SFLC…FIVY), 143–163 (LKLV…FYYG), 195–215 (VLLT…TMII), 224–244 (LGIL…LIWI), 258–278 (EAIF…DSVI), and 300–320 (ILIF…GIIV).

The protein belongs to the autoinducer-2 exporter (AI-2E) (TC 2.A.86) family.

The protein resides in the cell membrane. This is Putative transport protein jhp_0514 from Helicobacter pylori (strain J99 / ATCC 700824) (Campylobacter pylori J99).